The following is a 1034-amino-acid chain: Probable isoleucine--tRNA ligase, mitochondrial (1034 aa).

The N-terminal 32 residues, 1-32 (MISLNNSFFNKRVIVNSFNNYKRSFGTKSQNE), are a transit peptide targeting the mitochondrion. A 'HIGH' region motif is present at residues 94 to 104 (PYANGDLHMGH). The 'KMSKS' region motif lies at 655 to 659 (KMSKS). Residue Lys-658 participates in ATP binding.

This sequence belongs to the class-I aminoacyl-tRNA synthetase family.

It is found in the mitochondrion matrix. It catalyses the reaction tRNA(Ile) + L-isoleucine + ATP = L-isoleucyl-tRNA(Ile) + AMP + diphosphate. The sequence is that of Probable isoleucine--tRNA ligase, mitochondrial (mileS) from Dictyostelium discoideum (Social amoeba).